A 278-amino-acid chain; its full sequence is 4-diphosphocytidyl-2-C-methyl-D-erythritol kinase (278 aa).

K9 is a catalytic residue. Residue 89–99 (PVASGIGGGSA) coordinates ATP. The active site involves D128.

Belongs to the GHMP kinase family. IspE subfamily.

It catalyses the reaction 4-CDP-2-C-methyl-D-erythritol + ATP = 4-CDP-2-C-methyl-D-erythritol 2-phosphate + ADP + H(+). It participates in isoprenoid biosynthesis; isopentenyl diphosphate biosynthesis via DXP pathway; isopentenyl diphosphate from 1-deoxy-D-xylulose 5-phosphate: step 3/6. Catalyzes the phosphorylation of the position 2 hydroxy group of 4-diphosphocytidyl-2C-methyl-D-erythritol. This chain is 4-diphosphocytidyl-2-C-methyl-D-erythritol kinase, found in Cereibacter sphaeroides (strain KD131 / KCTC 12085) (Rhodobacter sphaeroides).